A 360-amino-acid polypeptide reads, in one-letter code: G-protein coupled receptor 15 (360 aa).

Over 1 to 33 (MDPEETSVYLDYYYATSPNPDIRETHSHVPYTS) the chain is Extracellular. A helical membrane pass occupies residues 34-54 (VFLPVFYIAVFLTGVLGNLVL). At 55 to 69 (MGALHFKPGSRRLID) the chain is on the cytoplasmic side. Residues 70–90 (IFIINLAASDFIFLVTLPLWV) traverse the membrane as a helical segment. Residues 91–120 (DKEASLGLWRTGSFLCKGSSYMISVNMHCS) are Extracellular-facing. Residues 121-141 (VFLLTCMSVDRYLAIVCPVVS) form a helical membrane-spanning segment. The Cytoplasmic segment spans residues 142-149 (RKFRRTDC). The chain crosses the membrane as a helical span at residues 150–170 (AYVVCASIWFISCLLGLPTLL). Over 171–192 (SRELTLIDDKPYCAEKKATPLK) the chain is Extracellular. A helical membrane pass occupies residues 193–213 (LIWSLVALIFTFFVPLLSIVT). Residues 214–239 (CYCRIARKLCAHYQQSGKHNKKLKKS) are Cytoplasmic-facing. A helical membrane pass occupies residues 240–260 (IKIIFIVVAAFLVSWLPFNTS). Residues 261–284 (KLLAIVSGLQQERYFPSAILQLGM) lie on the Extracellular side of the membrane. The chain crosses the membrane as a helical span at residues 285–305 (EVSGPLAFANSCVNPFIYYIF). Topologically, residues 306–360 (DSYIRRAIVHCLCPCLKNYDFGSSTETSDSHLTKALSTFIHAEDFTRRRKRSVSL) are cytoplasmic. Ser-359 bears the Phosphoserine mark.

It belongs to the G-protein coupled receptor 1 family. As to quaternary structure, interacts with adapter YWHAE; this interaction promotes ER-to-Golgi transport of GPR15. Phosphorylation is necessary for YWHAE binding and efficient surface expression. In terms of processing, O-glycosylated. Sialylated O-glycans in the N-terminal tail inhibits binding of GPR15LG. Post-translationally, sulfation is required for efficient binding of GPR15LG.

It is found in the cell membrane. Functionally, g protein-coupled receptor that plays an important role in immune homeostasis. Acts via its natural ligand GPR15LG, a chemokine-like polypeptide strongly expressed in gastrointestinal tissues. GPR15-GPR15LG signaling axis regulates intestinal homeostasis and inflammation through the migration of immune cells. Controls thereby the specific homing of T-cells, particularly FOXP3+ regulatory T-cells (Tregs), to the large intestine lamina propria. Also required for skin localization of thymus-derived dendritic epidermal T-cells. Plays an important role in mediating cytoprotective function as well as angiogenesis of thrombomodulin. Mechanistically, preferentially signals through the Gi/o pathway to inhibit adenylate cyclase activity and activate a phosphatidylinositol-calcium second messenger system that regulates the release of Ca(2+) ions from intracellular stores. The sequence is that of G-protein coupled receptor 15 (GPR15) from Chlorocebus aethiops (Green monkey).